The chain runs to 152 residues: Transcriptional regulator MraZ (152 aa).

2 consecutive SpoVT-AbrB domains span residues 5–52 (TSAI…PLPE) and 81–124 (ASDC…HDTA).

Belongs to the MraZ family. As to quaternary structure, forms oligomers.

The protein localises to the cytoplasm. It is found in the nucleoid. This is Transcriptional regulator MraZ from Colwellia psychrerythraea (strain 34H / ATCC BAA-681) (Vibrio psychroerythus).